The chain runs to 270 residues: Undecaprenyl-diphosphatase 1 (270 aa).

Helical transmembrane passes span 79–99 (NLLL…LLFS), 105–125 (VLFN…IILW), 155–175 (LALI…LFLG), 182–202 (TEFS…YSLI), 215–235 (VFAV…RALL), and 242–262 (SFAV…GTWW).

It belongs to the UppP family.

It localises to the cell inner membrane. It carries out the reaction di-trans,octa-cis-undecaprenyl diphosphate + H2O = di-trans,octa-cis-undecaprenyl phosphate + phosphate + H(+). In terms of biological role, catalyzes the dephosphorylation of undecaprenyl diphosphate (UPP). Confers resistance to bacitracin. The sequence is that of Undecaprenyl-diphosphatase 1 from Chromobacterium violaceum (strain ATCC 12472 / DSM 30191 / JCM 1249 / CCUG 213 / NBRC 12614 / NCIMB 9131 / NCTC 9757 / MK).